The sequence spans 741 residues: Cellulose 1,4-beta-cellobiosidase (reducing end) CelS (741 aa).

A signal peptide spans 1 to 27 (MVKSRKISILLAVAMLVSIMIPTTAFA). Glu76 is a binding site for substrate. Glu87 functions as the Proton donor in the catalytic mechanism. Substrate is bound by residues Thr140, Asn204, Asp241, Gln247, and 251–252 (TN). Catalysis depends on Asp255, which acts as the Nucleophile. Residues 301–302 (KY), 326–327 (WY), Tyr421, Asp520, and 645–646 (WH) each bind substrate. Positions 673–739 (STKLYGDVND…ILKEIDTLPY (67 aa)) constitute a Dockerin domain. Asp679, Asn681, Asp683, Gly684, Lys685, Asp690, Asp711, Leu712, Asn713, Asp715, Arg717, and Asp722 together coordinate Ca(2+).

This sequence belongs to the glycosyl hydrolase 48 (cellulase L) family.

Its subcellular location is the secreted. The enzyme catalyses Hydrolysis of (1-&gt;4)-beta-D-glucosidic linkages in cellulose and similar substrates, releasing cellobiose from the reducing ends of the chains.. With respect to regulation, inhibited by cellobiose and lactose, but not by glucose. This enzyme catalyzes the exohydrolysis of 1,4-beta-glucosidic linkages in cellulose with a preference for amorphous or crystalline cellulose over carboxymethyl cellulose. This Acetivibrio thermocellus (strain ATCC 27405 / DSM 1237 / JCM 9322 / NBRC 103400 / NCIMB 10682 / NRRL B-4536 / VPI 7372) (Clostridium thermocellum) protein is Cellulose 1,4-beta-cellobiosidase (reducing end) CelS (celS).